We begin with the raw amino-acid sequence, 344 residues long: Glycerol-3-phosphate dehydrogenase [NAD(P)+] (344 aa).

4 residues coordinate NADPH: Ser23, Trp24, Arg44, and Lys118. Sn-glycerol 3-phosphate-binding residues include Lys118, Gly147, and Thr149. Ala151 contributes to the NADPH binding site. Sn-glycerol 3-phosphate-binding residues include Lys202, Asp255, Ser265, Arg266, and Asn267. Lys202 (proton acceptor) is an active-site residue. Arg266 lines the NADPH pocket. An NADPH-binding site is contributed by Glu292.

Belongs to the NAD-dependent glycerol-3-phosphate dehydrogenase family.

The protein resides in the cytoplasm. The catalysed reaction is sn-glycerol 3-phosphate + NAD(+) = dihydroxyacetone phosphate + NADH + H(+). It carries out the reaction sn-glycerol 3-phosphate + NADP(+) = dihydroxyacetone phosphate + NADPH + H(+). The protein operates within membrane lipid metabolism; glycerophospholipid metabolism. In terms of biological role, catalyzes the reduction of the glycolytic intermediate dihydroxyacetone phosphate (DHAP) to sn-glycerol 3-phosphate (G3P), the key precursor for phospholipid synthesis. This chain is Glycerol-3-phosphate dehydrogenase [NAD(P)+], found in Nitrosococcus oceani (strain ATCC 19707 / BCRC 17464 / JCM 30415 / NCIMB 11848 / C-107).